Here is a 200-residue protein sequence, read N- to C-terminus: Systemin (200 aa).

Positions 1–33 are disordered; the sequence is MGTPSYDIKNKGDDMQEEPKVKLHHEKGGDEKE. 2 consecutive propeptides follow at residues 1-178 and 197-200; these read MGTP…REDL and NNKL. The 1; truncated repeat unit spans residues 3–8; the sequence is TPSYDI. A compositionally biased stretch (basic and acidic residues) spans 8–33; sequence IKNKGDDMQEEPKVKLHHEKGGDEKE. A run of 4 repeats spans residues 37–45, 80–88, 117–125, and 145–153. Disordered regions lie at residues 106–159 and 178–200; these read EEEE…MEGE and LAVQ…NNKL. Basic and acidic residues-rich tracts occupy residues 111 to 140 and 146 to 158; these read EKEK…KVEH and KETP…KMEG.

In terms of tissue distribution, all organs except the roots. Transported out of wounds to distal tissues.

The protein localises to the cytoplasm. Its function is as follows. Activates a lipid-based signal transduction pathway in which linolenic acid is converted to jasmonic acid, a potent activator of defense gene transcription, including proteinase inhibitor. The polypeptide is Systemin (Solanum lycopersicum (Tomato)).